We begin with the raw amino-acid sequence, 343 residues long: Heat-inducible transcription repressor HrcA (343 aa).

The protein belongs to the HrcA family.

Functionally, negative regulator of class I heat shock genes (grpE-dnaK-dnaJ and groELS operons). Prevents heat-shock induction of these operons. This chain is Heat-inducible transcription repressor HrcA, found in Bacillus velezensis (strain DSM 23117 / BGSC 10A6 / LMG 26770 / FZB42) (Bacillus amyloliquefaciens subsp. plantarum).